A 301-amino-acid chain; its full sequence is Diaminopimelate epimerase (301 aa).

Asn15, Gln47, and Asn67 together coordinate substrate. Cys76 functions as the Proton donor in the catalytic mechanism. Substrate-binding positions include 77 to 78, Asn163, Asn197, and 215 to 216; these read GN and ER. The Proton acceptor role is filled by Cys224. Position 225–226 (225–226) interacts with substrate; the sequence is GS.

It belongs to the diaminopimelate epimerase family. As to quaternary structure, homodimer.

The protein resides in the cytoplasm. It catalyses the reaction (2S,6S)-2,6-diaminopimelate = meso-2,6-diaminopimelate. Its pathway is amino-acid biosynthesis; L-lysine biosynthesis via DAP pathway; DL-2,6-diaminopimelate from LL-2,6-diaminopimelate: step 1/1. Catalyzes the stereoinversion of LL-2,6-diaminopimelate (L,L-DAP) to meso-diaminopimelate (meso-DAP), a precursor of L-lysine and an essential component of the bacterial peptidoglycan. The chain is Diaminopimelate epimerase from Rhizobium rhizogenes (strain K84 / ATCC BAA-868) (Agrobacterium radiobacter).